Consider the following 307-residue polypeptide: Predicted GPI-anchored protein 44 (307 aa).

The N-terminal stretch at 1-22 (MLSTNNLLILLIFSFLITNVKS) is a signal peptide. Residues asparagine 146 and asparagine 217 are each glycosylated (N-linked (GlcNAc...) asparagine). The tract at residues 232-261 (TPQPLLETPSQESSAPNIDSTTPTTIDNTV) is disordered. The segment covering 239-254 (TPSQESSAPNIDSTTP) has biased composition (polar residues). The GPI-anchor amidated glycine moiety is linked to residue glycine 286. The propeptide at 287–307 (GAMGYPSISVALGLVFIAYLV) is removed in mature form.

The protein localises to the cell membrane. This Candida albicans (strain SC5314 / ATCC MYA-2876) (Yeast) protein is Predicted GPI-anchored protein 44 (PGA44).